The chain runs to 805 residues: Mitochondrial intermediate peptidase (805 aa).

The N-terminal 25 residues, 1–25 (MIQPLVKASRPRLWVCSDCLLRRTL), are a transit peptide targeting the mitochondrion. Zn(2+) is bound at residue His578. Glu579 is a catalytic residue. Zn(2+)-binding residues include His582 and His585.

Belongs to the peptidase M3 family. Requires Zn(2+) as cofactor.

The protein localises to the mitochondrion matrix. It carries out the reaction Release of an N-terminal octapeptide as second stage of processing of some proteins imported into the mitochondrion.. Cleaves proteins, imported into the mitochondrion, to their mature size. While most mitochondrial precursor proteins are processed to the mature form in one step by mitochondrial processing peptidase (MPP), the sequential cleavage by MIP of an octapeptide after initial processing by MPP is a required step for a subgroup of nuclear-encoded precursor proteins destined for the matrix or the inner membrane. This Neurospora crassa (strain ATCC 24698 / 74-OR23-1A / CBS 708.71 / DSM 1257 / FGSC 987) protein is Mitochondrial intermediate peptidase (oct-1).